We begin with the raw amino-acid sequence, 363 residues long: NAD(P)H-quinone oxidoreductase subunit 1, chloroplastic (363 aa).

The next 8 helical transmembrane spans lie at 30–50 (LFPI…IVWL), 98–118 (FSIG…VIPF), 127–147 (LSIG…GLLM), 165–185 (AAQS…ISLL), 203–223 (FWGW…ISSL), 248–268 (YSGI…LVSS), 300–320 (VFGT…FLFI), and 336–356 (LLNL…LLTT).

This sequence belongs to the complex I subunit 1 family. As to quaternary structure, NDH is composed of at least 16 different subunits, 5 of which are encoded in the nucleus.

The protein resides in the plastid. Its subcellular location is the chloroplast thylakoid membrane. It carries out the reaction a plastoquinone + NADH + (n+1) H(+)(in) = a plastoquinol + NAD(+) + n H(+)(out). It catalyses the reaction a plastoquinone + NADPH + (n+1) H(+)(in) = a plastoquinol + NADP(+) + n H(+)(out). Functionally, NDH shuttles electrons from NAD(P)H:plastoquinone, via FMN and iron-sulfur (Fe-S) centers, to quinones in the photosynthetic chain and possibly in a chloroplast respiratory chain. The immediate electron acceptor for the enzyme in this species is believed to be plastoquinone. Couples the redox reaction to proton translocation, and thus conserves the redox energy in a proton gradient. This is NAD(P)H-quinone oxidoreductase subunit 1, chloroplastic from Nicotiana tomentosiformis (Tobacco).